The chain runs to 28 residues: leu operon leader peptide (28 aa).

Involved in control of the biosynthesis of leucine. The chain is leu operon leader peptide (leuL) from Salmonella typhi.